The following is a 720-amino-acid chain: MKDDFNDEEEVQSFGYKRFGIQEGNECTKCKNDWALRVAIALLYVLCALLTIAVAVLGYKVVQRMDNVTEGMQNYGGKITAVETDLKKLDDQTGEKSENATSELHSFKLEFQTLQKQLSDVIVKTSNNRAVLKELQLAGEDMQSGHLSLRDLLESNANVISKVNHTLNTYNSLIDGLKTETARLQSDLHVQTSEQGQNSHSISTLNFTQTQQRNLISSLQRSVEDTGQAVQKLKNDYQSLQQVARQTKADADWLREKVQNLQALAANNSLLTRSNSDSLEDVTSQLTTLSEQVQNTSTITDSHDQSLRELMDQQRDHDNATSIRFDALEARLDSNEGEMDRITGNVSFTTQLLRAISTDLNGLRTCSETVTRHSELLHGLNNSVAETRAESTELKAQQEELAVRLDKEVSSLSIVMDEMKLVDNKHSQLITNFTILQGPPGPRGPRGDKGSMGLPGKTGPKGEKGEKGAPGDAGPKGEKGPAGPPGVPGLKGPPGSRGSPGPKGSRGSGGRQGPSGEKGDPGIPGMPGRDGQPGPTGPQGPQGLRGPAGPAGLEGARGPVGPIGPPGPPGLPGLPAPPIVVPPVDPQGFVNRQVAPPPTTTPGCPPQWKGFREQCYHFSAPMESLNFDEAKERCSNLSSSMLIINDEEEQLWIKRQISGKGYFWLGLKWKPGQPDNWSHGHEAGEDCAGLIHEASWNDFFCTERIGFICERTNESKVPVL.

Topologically, residues 1-37 are cytoplasmic; the sequence is MKDDFNDEEEVQSFGYKRFGIQEGNECTKCKNDWALR. The helical; Signal-anchor for type II membrane protein transmembrane segment at 38 to 58 threads the bilayer; sequence VAIALLYVLCALLTIAVAVLG. Residues 59 to 720 are Extracellular-facing; the sequence is YKVVQRMDNV…RTNESKVPVL (662 aa). Coiled-coil stretches lie at residues 95-120, 216-267, and 377-408; these read EKSENATSELHSFKLEFQTLQKQLSD, ISSL…LAAN, and LHGLNNSVAETRAESTELKAQQEELAVRLDKE. Residues 433–576 form a disordered region; the sequence is FTILQGPPGP…GPPGLPGLPA (144 aa). 2 Collagen-like domains span residues 444 to 503 and 510 to 569; these read GPRG…PGPK and GRQG…PGPP. Over residues 460–479 the composition is skewed to basic and acidic residues; it reads PKGEKGEKGAPGDAGPKGEK. The span at 488 to 503 shows a compositional bias: low complexity; it reads PGLKGPPGSRGSPGPK. Positions 504–513 are enriched in gly residues; the sequence is GSRGSGGRQG. A compositionally biased stretch (low complexity) spans 527 to 560; that stretch reads PGRDGQPGPTGPQGPQGLRGPAGPAGLEGARGPV. A compositionally biased stretch (pro residues) spans 562-576; the sequence is PIGPPGPPGLPGLPA. Cystine bridges form between Cys604/Cys615, Cys634/Cys709, and Cys687/Cys701. The region spanning 611 to 710 is the C-type lectin domain; the sequence is FREQCYHFSA…CTERIGFICE (100 aa). Ca(2+)-binding residues include Ile643, Asn645, and Glu649. The a carbohydrate site is built by Lys670, Gln673, and Asp675. Ca(2+)-binding residues include Gln673, Asp675, Asn676, Glu685, Asp686, Asn697, Asp698, and Glu710. Glu685 provides a ligand contact to a carbohydrate. Residues Asn697 and Asp698 each contribute to the a carbohydrate site.

It localises to the membrane. Its function is as follows. Scavenger receptor that displays several functions associated with host defense. Binds to carbohydrates. This Danio rerio (Zebrafish) protein is Collectin-12 (colec12).